A 23-amino-acid polypeptide reads, in one-letter code: Chaperonin GroEL (23 aa).

It belongs to the chaperonin (HSP60) family. As to quaternary structure, forms a cylinder of 14 subunits composed of two heptameric rings stacked back-to-back. Interacts with the co-chaperonin GroES. In terms of processing, phosphorylated on threonine.

The protein resides in the cytoplasm. The catalysed reaction is ATP + H2O + a folded polypeptide = ADP + phosphate + an unfolded polypeptide.. Its function is as follows. Together with its co-chaperonin GroES, plays an essential role in assisting protein folding. The GroEL-GroES system forms a nano-cage that allows encapsulation of the non-native substrate proteins and provides a physical environment optimized to promote and accelerate protein folding. The chain is Chaperonin GroEL from Acidithiobacillus ferrooxidans (Thiobacillus ferrooxidans).